The chain runs to 371 residues: MAAEQRRSTIFDIVSKCIVQSVLRDISINSEYIESKAKQLCYCPASKKESVINGIYNCCESNIEIMDKEQLLKILDNLRCHSAHVCNATDFWRLYNSLKRFTHTTAFFNTCKPTILATLNTLITLILSNKLLYAAEMVEYLENQLDSSNKSMSQELAELLEMKYALINLVQYRILPMIIGEPIIVAGFSGKEPISDYSAEVERLMELPVKTDIVNTTYDFLARKGIDTSNNIAEYIAGLKIEEIEKVEKYLPEVISTIANSNIIKNKKSIFPANINDKQIMECSRMLDTSEKYSKGYKTDGAVTSPLTGNNTITTFIPISASDMQKFTILEYLYIMRVMANNVKKKNVGKNNGGVVMHINSPFKVINLPKC.

It belongs to the chordopoxvirinae G7 family. As to quaternary structure, part of a complex composed of A30, G7, F10 kinase, A15, D2, D3, and J1. Phosphorylated on serines by F10 kinase, phosphorylation state is regulated by H1 phosphatase. In terms of processing, undergoes proteolytic processing during morphogenesis, probably required for the transformation of immature virions (IV) into mature virions (MV).

It localises to the host cytoplasm. It is found in the virion. Late protein which is a part of a large complex required for early virion morphogenesis. This complex participates in the formation of virosomes and the incorporation of virosomal contents into nascent immature virions. The sequence is that of Assembly protein G7 from Vaccinia virus (strain Copenhagen) (VACV).